The following is a 716-amino-acid chain: DNA ligase (716 aa).

NAD(+) is bound by residues 42–46, 91–92, and glutamate 125; these read DAEYD and SL. The N6-AMP-lysine intermediate role is filled by lysine 127. Arginine 148, glutamate 184, lysine 300, and lysine 324 together coordinate NAD(+). Residues cysteine 429, cysteine 432, cysteine 447, and cysteine 453 each contribute to the Zn(2+) site. The BRCT domain maps to 638 to 716; sequence TASSPIAGKI…EEAWLQLIEG (79 aa).

Belongs to the NAD-dependent DNA ligase family. LigA subfamily. Requires Mg(2+) as cofactor. Mn(2+) is required as a cofactor.

It carries out the reaction NAD(+) + (deoxyribonucleotide)n-3'-hydroxyl + 5'-phospho-(deoxyribonucleotide)m = (deoxyribonucleotide)n+m + AMP + beta-nicotinamide D-nucleotide.. Its function is as follows. DNA ligase that catalyzes the formation of phosphodiester linkages between 5'-phosphoryl and 3'-hydroxyl groups in double-stranded DNA using NAD as a coenzyme and as the energy source for the reaction. It is essential for DNA replication and repair of damaged DNA. The sequence is that of DNA ligase from Bartonella henselae (strain ATCC 49882 / DSM 28221 / CCUG 30454 / Houston 1) (Rochalimaea henselae).